The primary structure comprises 73 residues: Protein WFDC10B (73 aa).

The N-terminal stretch at 1-21 (MAPQTLLLVLVLCVLLLQAQG) is a signal peptide. The WAP domain maps to 28–73 (RMQRIKVCEKRPSIDLCIHHCSYFQKCETNKICCSAFCGNICMSIL).

As to expression, ubiquitously expressed.

Its subcellular location is the secreted. This chain is Protein WFDC10B (WFDC10B), found in Homo sapiens (Human).